Here is a 112-residue protein sequence, read N- to C-terminus: Thyroid transcription factor 1 (112 aa).

The segment at residues 1-60 is a DNA-binding region (homeobox); the sequence is RRNRRVLFSQAQVYELERRFKQQKYLSAPEREHLASMIHLTPTQVKIWFQNHRYKMKRQA. Positions 59–100 are disordered; the sequence is QAKDKAAQQQLQQDSGGGGGGGGAGCPQQQQAQQQSPRRVAV. The span at 73–83 shows a compositional bias: gly residues; sequence SGGGGGGGGAG. The span at 84-93 shows a compositional bias: low complexity; it reads CPQQQQAQQQ.

Belongs to the NK-2 homeobox family. Post-translationally, phosphorylated on serine residues.

It is found in the nucleus. Transcription factor that binds and activates the promoter of thyroid specific genes such as thyroglobulin, thyroperoxidase, and thyrotropin receptor. Crucial in the maintenance of the thyroid differentiation phenotype. May play a role in lung development and surfactant homeostasis. This Cavia porcellus (Guinea pig) protein is Thyroid transcription factor 1 (TITF1).